Reading from the N-terminus, the 119-residue chain is Membrane-anchored ubiquitin-fold protein 3 (119 aa).

The 69-residue stretch at Ile-8–Val-76 folds into the Ubiquitin-like domain. Cys-116 carries the cysteine methyl ester modification. The S-geranylgeranyl cysteine moiety is linked to residue Cys-116. The propeptide at Thr-117–Leu-119 is removed in mature form.

It is found in the cell membrane. Functionally, may serve as docking site to facilitate the association of other proteins to the plasma membrane. This chain is Membrane-anchored ubiquitin-fold protein 3 (MUB3), found in Oryza sativa subsp. japonica (Rice).